The primary structure comprises 307 residues: Chaperone protein DnaJ 2 (307 aa).

The J domain occupies 6 to 71 (NYYQILGVPR…TKRRELDSRL (66 aa)). A disordered region spans residues 69–133 (SRLFGRFRRP…TRRTKVVSPA (65 aa)). The segment covering 88 to 99 (NGGRSPNGTSVN) has biased composition (polar residues). The span at 100 to 114 (GQVRTPTGRTGTRQP) shows a compositional bias: low complexity.

The protein belongs to the DnaJ family. Homodimer. Zn(2+) serves as cofactor.

Its subcellular location is the cytoplasm. Functionally, participates actively in the response to hyperosmotic and heat shock by preventing the aggregation of stress-denatured proteins and by disaggregating proteins, also in an autonomous, DnaK-independent fashion. Unfolded proteins bind initially to DnaJ; upon interaction with the DnaJ-bound protein, DnaK hydrolyzes its bound ATP, resulting in the formation of a stable complex. GrpE releases ADP from DnaK; ATP binding to DnaK triggers the release of the substrate protein, thus completing the reaction cycle. Several rounds of ATP-dependent interactions between DnaJ, DnaK and GrpE are required for fully efficient folding. Also involved, together with DnaK and GrpE, in the DNA replication of plasmids through activation of initiation proteins. This Synechocystis sp. (strain ATCC 27184 / PCC 6803 / Kazusa) protein is Chaperone protein DnaJ 2 (dnaJ2).